The primary structure comprises 181 residues: MARRPHNAPPQRETGPRVNERIRCPEVRLIGANGENIGVVTPSRAMMMAEEAGLDLVEISPNAEPPVCKIMDFGKFKYEQQKREAEARKKQHIIEIKEIKFRPGTDTHDYDVKMRSVLKFLSEGDKVKVTLRFRGREMAHQELGLELLNRVAAHVSEAEAGKVEAMPKLEGRQMVMMIAPK.

This sequence belongs to the IF-3 family. Monomer.

It is found in the cytoplasm. IF-3 binds to the 30S ribosomal subunit and shifts the equilibrium between 70S ribosomes and their 50S and 30S subunits in favor of the free subunits, thus enhancing the availability of 30S subunits on which protein synthesis initiation begins. The chain is Translation initiation factor IF-3 from Cereibacter sphaeroides (strain ATCC 17023 / DSM 158 / JCM 6121 / CCUG 31486 / LMG 2827 / NBRC 12203 / NCIMB 8253 / ATH 2.4.1.) (Rhodobacter sphaeroides).